Consider the following 617-residue polypeptide: Protein 4.1 (617 aa).

Positions 1-282 (MHCKVSLLDD…EHHTFFRLTS (282 aa)) constitute an FERM domain. Position 13 is a phosphotyrosine (Y13). Residue T169 is modified to Phosphothreonine. Residues 308 to 401 (TRQASALIDR…AEPEPSEAWK (94 aa)) are disordered. Residues S312, S331, and S333 each carry the phosphoserine modification. Positions 348 to 361 (RPTSAPAIAPSPAA) are enriched in low complexity. The span at 387-396 (APPEDAEPEP) shows a compositional bias: acidic residues. A spectrin--actin-binding region spans residues 401–466 (KKKRERLDGE…WDKRLSTHSP (66 aa)). Y413 carries the post-translational modification Phosphotyrosine; by EGFR. S417, S427, S437, and S462 each carry phosphoserine. The residue at position 465 (S465) is a Phosphoserine; by CDK1. The segment at 467–617 (FRTLNINGQI…VHQETEISEE (151 aa)) is C-terminal (CTD). A phosphothreonine mark is found at T489 and T612.

Binds with a high affinity to glycophorin and with lower affinity to band III protein. Associates with the nuclear mitotic apparatus. Binds calmodulin, CPAP and DLG1. Also found to associate with contractile apparatus and tight junctions. Interacts with NUMA1; this interaction is negatively regulated by CDK1 during metaphase and promotes anaphase-specific localization of NUMA1 in symmetrically dividing cells. Interacts with ATP2B1; regulates small intestinal calcium absorption through regulation of membrane expression of ATP2B1. In terms of processing, phosphorylated at multiple sites by different protein kinases and each phosphorylation event selectively modulates the protein's functions. Post-translationally, phosphorylation on Tyr-413 reduces the ability of 4.1 to promote the assembly of the spectrin/actin/4.1 ternary complex.

It is found in the nucleus. The protein resides in the cytoplasm. The protein localises to the cytoskeleton. Its subcellular location is the cell cortex. Protein 4.1 is a major structural element of the erythrocyte membrane skeleton. It plays a key role in regulating membrane physical properties of mechanical stability and deformability by stabilizing spectrin-actin interaction. Recruits DLG1 to membranes. Required for dynein-dynactin complex and NUMA1 recruitment at the mitotic cell cortex during anaphase. This chain is Protein 4.1, found in Bos taurus (Bovine).